A 351-amino-acid chain; its full sequence is uncharacterized protein (351 aa).

Asp-215, Asp-226, His-290, Glu-319, and Glu-333 together coordinate Mn(2+).

This sequence belongs to the peptidase M24B family. Mn(2+) is required as a cofactor.

This is an uncharacterized protein from Staphylococcus aureus (strain bovine RF122 / ET3-1).